A 175-amino-acid polypeptide reads, in one-letter code: Nucleoside triphosphate/diphosphate phosphatase (175 aa).

The active-site Proton donor is the Arg23. Residues Asn87, Asp103, Asp105, Asp107, Asp120, and Glu123 each coordinate Mg(2+).

Belongs to the Ntdp family. It depends on Mg(2+) as a cofactor.

The catalysed reaction is a ribonucleoside 5'-triphosphate + H2O = a ribonucleoside 5'-diphosphate + phosphate + H(+). It carries out the reaction a ribonucleoside 5'-diphosphate + H2O = a ribonucleoside 5'-phosphate + phosphate + H(+). In terms of biological role, has nucleoside phosphatase activity towards nucleoside triphosphates and nucleoside diphosphates. This chain is Nucleoside triphosphate/diphosphate phosphatase, found in Shouchella clausii (strain KSM-K16) (Alkalihalobacillus clausii).